Consider the following 370-residue polypeptide: Ubiquitin carboxyl-terminal hydrolase 12-B (370 aa).

The USP domain occupies 39 to 369; it reads FGLVNFGNTC…SGYILFYQSR (331 aa). The Nucleophile role is filled by Cys-48. Residues 145-168 form a disordered region; that stretch reads KQEKQNGRIPNGNIDNENNNNTPD. Residues 155–165 show a composition bias toward low complexity; sequence NGNIDNENNNN. Residues Cys-186, Cys-189, Cys-233, and Cys-236 each contribute to the Zn(2+) site. His-317 serves as the catalytic Proton acceptor.

This sequence belongs to the peptidase C19 family. USP12/USP46 subfamily. As to quaternary structure, interacts with WDR48.

The enzyme catalyses Thiol-dependent hydrolysis of ester, thioester, amide, peptide and isopeptide bonds formed by the C-terminal Gly of ubiquitin (a 76-residue protein attached to proteins as an intracellular targeting signal).. Deubiquitinating enzyme. Has almost no deubiquitinating activity by itself and requires the interaction with wdr48 to have a high activity. This chain is Ubiquitin carboxyl-terminal hydrolase 12-B (usp12-b), found in Xenopus laevis (African clawed frog).